We begin with the raw amino-acid sequence, 386 residues long: Adiponectin receptor protein 2 (386 aa).

Positions 1 to 72 (MNEPAKHRLG…ECHDDNSQED (72 aa)) are disordered. Over 1 to 147 (MNEPAKHRLG…SIFRIHTETG (147 aa)) the chain is Cytoplasmic. Positions 15–31 (PEPDIRLRKGHQLDDTR) are enriched in basic and acidic residues. Positions 58 to 72 (SPEEPECHDDNSQED) are enriched in acidic residues. A helical transmembrane segment spans residues 148–168 (NIWTHLLGCVFFLCLGIFYMF). Over 169–181 (RPNISFVAPLQEK) the chain is Extracellular. The chain crosses the membrane as a helical span at residues 182-202 (VVFGLFFLGAILCLSFSWLFH). Histidine 202 provides a ligand contact to Zn(2+). Residues 203 to 213 (TVYCHSEGVSR) are Cytoplasmic-facing. The chain crosses the membrane as a helical span at residues 214-234 (LFSKLDYSGIALLIMGSFVPW). At 235–245 (LYYSFYCNPQP) the chain is on the extracellular side. Residues 246-266 (CFIYLIVICVLGIAAIIVSQW) traverse the membrane as a helical segment. At 267–273 (DMFATPQ) the chain is on the cytoplasmic side. The helical transmembrane segment at 274-294 (YRGVRAGVFVGLGLSGIIPTL) threads the bilayer. At 295–309 (HYVISEGFLKAATIG) the chain is on the extracellular side. A helical membrane pass occupies residues 310–330 (QIGWLMLMASLYITGAALYAA). Residues 331-348 (RIPERFFPGKCDIWFHSH) are Cytoplasmic-facing. Residues histidine 348 and histidine 352 each contribute to the Zn(2+) site. Residues 349-369 (QLFHIFVVAGAFVHFHGVSNL) traverse the membrane as a helical segment. Over 370 to 386 (QEFRFMIGGGCTEEDAL) the chain is Extracellular.

This sequence belongs to the ADIPOR family. As to quaternary structure, may form homooligomers and heterooligomers with ADIPOR1. Interacts with APPL2 (via BAR domain); ADIPOQ dissociates this interaction. As to expression, detected in liver and quadriceps muscle (at protein level). Highly expressed in liver. Highly expressed in white adipose tissue, and at intermediate levels in brown adipose tissue. Expressed at intermediate level in heart, kidney, lung and skeletal muscle. Weakly expressed in brain, spleen and testis.

Its subcellular location is the cell membrane. Receptor for ADIPOQ, an essential hormone secreted by adipocytes that regulates glucose and lipid metabolism. Required for normal body fat and glucose homeostasis. ADIPOQ-binding activates a signaling cascade that leads to increased PPARA activity, and ultimately to increased fatty acid oxidation and glucose uptake. Has intermediate affinity for globular and full-length adiponectin. Required for normal revascularization after chronic ischemia caused by severing of blood vessels. The protein is Adiponectin receptor protein 2 of Mus musculus (Mouse).